Consider the following 761-residue polypeptide: 1,2-alpha-glucosylglycerol phosphorylase (761 aa).

Residue 327 to 328 (YQ) coordinates glycerol. Residue 333 to 334 (WD) participates in substrate binding. The active-site Proton donor is glutamate 475. Residue 587–588 (KQ) participates in substrate binding.

Belongs to the glycosyl hydrolase 65 family. In terms of assembly, homodimer.

The enzyme catalyses 2-O-(alpha-D-glucopyranosyl)glycerol + phosphate = beta-D-glucose 1-phosphate + glycerol. Functionally, catalyzes both the (1) reversible phosphorolysis of 2-O-alpha-D-glucopyranosyl-sn-glycerol (GG) from beta-D-glucose 1-phosphate (betaGlc1P) and glycerol and (2) the hydrolysis of betaGlc1P. the betaGlc1P hydrolysis is a glucosyl-transfer reaction to an acceptor water molecule that produces an anomer-inverted alpha-glucose, not a phosphatase-type reaction. In the absence of glycerol produces alpha-D-glucopyranose and phosphate from beta-D-glucopyranose 1-phosphate. In Bacillus selenitireducens (strain ATCC 700615 / DSM 15326 / MLS10), this protein is 1,2-alpha-glucosylglycerol phosphorylase.